We begin with the raw amino-acid sequence, 281 residues long: Ribosomal protein L11 methyltransferase (281 aa).

4 residues coordinate S-adenosyl-L-methionine: Thr133, Gly154, Asp175, and Asn216.

Belongs to the methyltransferase superfamily. PrmA family.

The protein resides in the cytoplasm. It carries out the reaction L-lysyl-[protein] + 3 S-adenosyl-L-methionine = N(6),N(6),N(6)-trimethyl-L-lysyl-[protein] + 3 S-adenosyl-L-homocysteine + 3 H(+). In terms of biological role, methylates ribosomal protein L11. The chain is Ribosomal protein L11 methyltransferase from Campylobacter jejuni subsp. jejuni serotype O:2 (strain ATCC 700819 / NCTC 11168).